Reading from the N-terminus, the 93-residue chain is N-acetyl-S-hydroxy-L-cysteine reductase (93 aa).

In terms of domain architecture, Glutaredoxin spans 1-93 (MSDVVNIVVW…NHAQIKEAKR (93 aa)). Residues cysteine 15 and cysteine 18 are joined by a disulfide bond.

It belongs to the glutaredoxin family.

The enzyme catalyses N-acetyl-S-hydroxy-L-cysteine + AH2 = N-acetyl-L-cysteine + A + H2O. The protein operates within amino-acid metabolism. Its function is as follows. Involved in a cysteine salvage pathway from S-alkylcysteine. Catalyzes the reduction of N-acetyl-S-hydroxy-L-cysteine (N-acetyl-L-cysteine sulfenic acid) to N-acetyl-L-cysteine. This pathway is likely important in the catabolism of alkylated cysteine generated by proteolysis of alkylated glutathione formed in the detoxification of a wide range of electrophiles. The chain is N-acetyl-S-hydroxy-L-cysteine reductase from Bacillus subtilis (strain 168).